A 116-amino-acid chain; its full sequence is Large ribosomal subunit protein bL20 (116 aa).

Belongs to the bacterial ribosomal protein bL20 family.

Binds directly to 23S ribosomal RNA and is necessary for the in vitro assembly process of the 50S ribosomal subunit. It is not involved in the protein synthesizing functions of that subunit. The sequence is that of Large ribosomal subunit protein bL20 from Desulforapulum autotrophicum (strain ATCC 43914 / DSM 3382 / VKM B-1955 / HRM2) (Desulfobacterium autotrophicum).